The following is a 616-amino-acid chain: MSLLQISEPGQTPAPHQRRLAAGIDLGTTHSLVATVRSGQAEALSDSEGRYLLPSVVQYQVDNINVGWQAKQEAEKDPANTISSIKRMLGRSLNDITSRYPNLPYHFHDNDSGLPLIKTPAGIVDPIQVSADILKALAERAIQSLGGELDGVVVTVPAYFDDAQRQGTKEAARRAGLHVLRLLNEPTAAAIAYGLDSGKEGTIVVYDLGGGTFDISVLRLTKGVFEVLATGGDTALGGDDFDMMLADWIRERAGFGYQNDVILQRQLLDIASETKIALSDNDVADININGWKGEITRAEFELLIQPLVKRTLLSVRRALKDADVDVDEVLEVVMVGGSTRVPLVRQMVGDYFKREPLTSIDPDKVVAIGASIQADILVGNKPDSEMLLLDVIPLSLGLETMGGLVEKVIPRNTTIPVARAQEFTTFKDGQTAMSVHVVQGEREMVSDCRSLARFTLRGIPPMAAGGAHIRVTFQVDADGLLSVSAMEKSTGVEASVQVKPSYGLSDTEIANMIQSSMENAKEDLQARRLAEQKVEAARVLESLTAALQEDAHLLTEDEKTAIDNVVDTLIESVEGTDPVAIENAIKQLDKQTQEFAARRMDTSIRQALAGHSVDEI.

The protein belongs to the heat shock protein 70 family.

Its function is as follows. Chaperone involved in the maturation of iron-sulfur cluster-containing proteins. Has a low intrinsic ATPase activity which is markedly stimulated by HscB. Involved in the maturation of IscU. The chain is Chaperone protein HscA from Proteus mirabilis (strain HI4320).